The chain runs to 289 residues: UPF0276 protein BPP1075 (289 aa).

It belongs to the UPF0276 family.

The sequence is that of UPF0276 protein BPP1075 from Bordetella parapertussis (strain 12822 / ATCC BAA-587 / NCTC 13253).